The primary structure comprises 325 residues: Acetyl-coenzyme A carboxylase carboxyl transferase subunit alpha (325 aa).

In terms of domain architecture, CoA carboxyltransferase C-terminal spans 38–292; sequence RLEERLSKLQ…DGILKETLKS (255 aa).

The protein belongs to the AccA family. Acetyl-CoA carboxylase is a heterohexamer composed of biotin carboxyl carrier protein (AccB), biotin carboxylase (AccC) and two subunits each of ACCase subunit alpha (AccA) and ACCase subunit beta (AccD).

The protein resides in the cytoplasm. It catalyses the reaction N(6)-carboxybiotinyl-L-lysyl-[protein] + acetyl-CoA = N(6)-biotinyl-L-lysyl-[protein] + malonyl-CoA. Its pathway is lipid metabolism; malonyl-CoA biosynthesis; malonyl-CoA from acetyl-CoA: step 1/1. In terms of biological role, component of the acetyl coenzyme A carboxylase (ACC) complex. First, biotin carboxylase catalyzes the carboxylation of biotin on its carrier protein (BCCP) and then the CO(2) group is transferred by the carboxyltransferase to acetyl-CoA to form malonyl-CoA. The chain is Acetyl-coenzyme A carboxylase carboxyl transferase subunit alpha from Bacillus velezensis (strain DSM 23117 / BGSC 10A6 / LMG 26770 / FZB42) (Bacillus amyloliquefaciens subsp. plantarum).